A 349-amino-acid polypeptide reads, in one-letter code: Protein POOR HOMOLOGOUS SYNAPSIS 1 (349 aa).

It localises to the cytoplasm. In terms of biological role, required for accurate chromosome segregation in meiosis. Required for pairing to occur between homologous chromosomes. Acts in early recombination steps and ensures pairing fidelity and proper repair of meiotic DNA double-strand-breaks. Regulates recombination and pairing of homologous chromosomes during meiotic prophase by controlling transport of RAD50 from cytoplasm to the nucleus. May affect pairing of the gene-rich fraction of the genome rather than preventing pairing between repetitive DNA elements. The sequence is that of Protein POOR HOMOLOGOUS SYNAPSIS 1 from Arabidopsis thaliana (Mouse-ear cress).